The chain runs to 311 residues: GTPase Era (311 aa).

In terms of domain architecture, Era-type G spans 18 to 185; it reads RSGFVALIGA…AKYLAESVPN (168 aa). The segment at 26–33 is G1; the sequence is GAPNAGKS. 26-33 provides a ligand contact to GTP; that stretch reads GAPNAGKS. The interval 52 to 56 is G2; it reads QTTRA. A G3 region spans residues 73 to 76; the sequence is DTPG. Residues 73-77 and 135-138 contribute to the GTP site; these read DTPGI and NKVD. Positions 135-138 are G4; that stretch reads NKVD. The tract at residues 164-166 is G5; that stretch reads ISA. Residues 216 to 293 form the KH type-2 domain; it reads LHEELPYAST…HLFLFVKVRE (78 aa).

It belongs to the TRAFAC class TrmE-Era-EngA-EngB-Septin-like GTPase superfamily. Era GTPase family. As to quaternary structure, monomer.

The protein localises to the cytoplasm. It is found in the cell inner membrane. Its function is as follows. An essential GTPase that binds both GDP and GTP, with rapid nucleotide exchange. Plays a role in 16S rRNA processing and 30S ribosomal subunit biogenesis and possibly also in cell cycle regulation and energy metabolism. In Brucella suis biovar 1 (strain 1330), this protein is GTPase Era.